The sequence spans 211 residues: High frequency lysogenization protein HflD homolog (211 aa).

The protein belongs to the HflD family.

The protein localises to the cytoplasm. Its subcellular location is the cell membrane. The protein is High frequency lysogenization protein HflD homolog of Buchnera aphidicola subsp. Acyrthosiphon pisum (strain 5A).